Here is a 464-residue protein sequence, read N- to C-terminus: 3-isopropylmalate dehydratase large subunit (464 aa).

[4Fe-4S] cluster is bound by residues cysteine 337, cysteine 397, and cysteine 400.

This sequence belongs to the aconitase/IPM isomerase family. LeuC type 1 subfamily. Heterodimer of LeuC and LeuD. [4Fe-4S] cluster is required as a cofactor.

It catalyses the reaction (2R,3S)-3-isopropylmalate = (2S)-2-isopropylmalate. It participates in amino-acid biosynthesis; L-leucine biosynthesis; L-leucine from 3-methyl-2-oxobutanoate: step 2/4. Catalyzes the isomerization between 2-isopropylmalate and 3-isopropylmalate, via the formation of 2-isopropylmaleate. The chain is 3-isopropylmalate dehydratase large subunit from Bacillus cytotoxicus (strain DSM 22905 / CIP 110041 / 391-98 / NVH 391-98).